The chain runs to 217 residues: Probable GTP-binding protein EngB (217 aa).

In terms of domain architecture, EngB-type G spans 44–217 (DRIEVCFAGR…TLRTIVATLG (174 aa)). GTP is bound by residues 52–59 (GRSNVGKS), 79–83 (GRTQE), 97–100 (DLPG), 164–167 (TKAD), and 198–200 (TSS). Residues serine 59 and threonine 81 each contribute to the Mg(2+) site.

Belongs to the TRAFAC class TrmE-Era-EngA-EngB-Septin-like GTPase superfamily. EngB GTPase family. The cofactor is Mg(2+).

In terms of biological role, necessary for normal cell division and for the maintenance of normal septation. The polypeptide is Probable GTP-binding protein EngB (Cereibacter sphaeroides (strain ATCC 17023 / DSM 158 / JCM 6121 / CCUG 31486 / LMG 2827 / NBRC 12203 / NCIMB 8253 / ATH 2.4.1.) (Rhodobacter sphaeroides)).